The primary structure comprises 951 residues: Kinase suppressor of Ras 2 (951 aa).

The interval Pro237–Lys298 is disordered. The span at Arg260–Pro274 shows a compositional bias: low complexity. Phosphothreonine occurs at positions 273 and 277. The Phorbol-ester/DAG-type zinc-finger motif lies at Lys413–Cys457. 8 residues coordinate Zn(2+): His414, Cys426, Cys429, Cys439, Cys442, His447, Cys450, and Cys457. The residue at position 475 (Ser475) is a Phosphoserine; by MARK3. 2 disordered regions span residues Arg489–Asn559 and Glu614–Glu634. The span at His494–Asn503 shows a compositional bias: polar residues. Thr498 bears the Phosphothreonine mark. Positions Ser518–Ser531 are enriched in low complexity. Residues Ser532–Gln552 are compositionally biased toward pro residues. The Protein kinase domain occupies Leu667–Leu932. An ATP-binding site is contributed by Ile673–Val681. Asp787 serves as the catalytic Proton donor/acceptor. ATP-binding residues include Lys789 and Asp804.

It belongs to the protein kinase superfamily. TKL Ser/Thr protein kinase family. Heterodimerizes (via N-terminus) with BRAF (via N-terminus) in a MAP2K1/MEK1-dependent manner. Interacts with BRAF; this increases the low intrinsic protein kinase activity of KSR2. Interacts with MAP2K1, forming a heterodimer that can dimerize to form a heterotetramer. Interacts with MAP3K8, MAPK, RAS and RAF. Phosphorylated on Ser-475 by MARK3.

The protein resides in the cytoplasm. It localises to the membrane. The catalysed reaction is L-seryl-[protein] + ATP = O-phospho-L-seryl-[protein] + ADP + H(+). The enzyme catalyses L-threonyl-[protein] + ATP = O-phospho-L-threonyl-[protein] + ADP + H(+). Functionally, location-regulated scaffold connecting MEK to RAF. Has very low protein kinase activity and can phosphorylate MAP2K1 at several Ser and Thr residues with very low efficiency (in vitro). Acts as MAP2K1/MEK1-dependent allosteric activator of BRAF; upon binding to MAP2K1/MEK1, dimerizes with BRAF and promotes BRAF-mediated phosphorylation of MAP2K1/MEK1. Interaction with BRAF enhances KSR2-mediated phosphorylation of MAP2K1 (in vitro). Blocks MAP3K8 kinase activity and MAP3K8-mediated signaling. Acts as a negative regulator of MAP3K3-mediated activation of ERK, JNK and NF-kappa-B pathways, inhibiting MAP3K3-mediated interleukin-8 production. In Mus musculus (Mouse), this protein is Kinase suppressor of Ras 2.